A 308-amino-acid chain; its full sequence is UPF0282 protein M1425_2116 (308 aa).

This sequence belongs to the UPF0282 family.

The protein is UPF0282 protein M1425_2116 of Saccharolobus islandicus (strain M.14.25 / Kamchatka #1) (Sulfolobus islandicus).